Consider the following 235-residue polypeptide: Calcium-activated potassium channel subunit beta-2 (235 aa).

The tract at residues 1–45 is ball and chain; the sequence is MFIWTSGRTSSSYRHDEKRNIYQKIRDHDLLDKRKTVTALKAGED. The Cytoplasmic segment spans residues 1-46; the sequence is MFIWTSGRTSSSYRHDEKRNIYQKIRDHDLLDKRKTVTALKAGEDR. The helical transmembrane segment at 47–67 threads the bilayer; it reads AILLGLAMMVCSIMMYFLLGI. At 68-194 the chain is on the extracellular side; that stretch reads TLLRSYMQSV…VILTKLYSSN (127 aa). Residues asparagine 88, asparagine 96, and asparagine 119 are each glycosylated (N-linked (GlcNAc...) asparagine). A helical transmembrane segment spans residues 195-215; sequence VLFHSLFWPTCMMAGGVAIVA. Residues 216-235 are Cytoplasmic-facing; sequence MVKLTQYLSLLCERIQRINR.

This sequence belongs to the KCNMB (TC 8.A.14.1) family. KCNMB2 subfamily. Interacts with KCNMA1 tetramer. There are probably 4 molecules of KCMNB2 per KCNMA1 tetramer. N-glycosylated. In terms of tissue distribution, expressed in kidney, heart and brain. Highly expressed in ovary. Expressed at low level in other tissues.

It is found in the membrane. Functionally, regulatory subunit of the calcium activated potassium KCNMA1 (maxiK) channel. Modulates the calcium sensitivity and gating kinetics of KCNMA1, thereby contributing to KCNMA1 channel diversity. Acts as a negative regulator that confers rapid and complete inactivation of KCNMA1 channel complex. May participate in KCNMA1 inactivation in chromaffin cells of the adrenal gland or in hippocampal CA1 neurons. This chain is Calcium-activated potassium channel subunit beta-2 (KCNMB2), found in Homo sapiens (Human).